The sequence spans 289 residues: Serine/threonine-protein phosphatase Pgam5, mitochondrial (289 aa).

A helical membrane pass occupies residues phenylalanine 7–leucine 23.

The protein belongs to the phosphoglycerate mutase family. BPG-dependent PGAM subfamily. As to quaternary structure, interacts with Pk92B/ASK1.

The protein localises to the mitochondrion outer membrane. It carries out the reaction O-phospho-L-seryl-[protein] + H2O = L-seryl-[protein] + phosphate. The catalysed reaction is O-phospho-L-threonyl-[protein] + H2O = L-threonyl-[protein] + phosphate. Its function is as follows. Displays phosphatase activity for serine/threonine residues, and dephosphorylates and activates Pk92B kinase. Has apparently no phosphoglycerate mutase activity. This is Serine/threonine-protein phosphatase Pgam5, mitochondrial from Drosophila virilis (Fruit fly).